The sequence spans 236 residues: Purine nucleoside phosphorylase DeoD-type (236 aa).

Position 4 (His4) interacts with a purine D-ribonucleoside. Residues Gly20, Arg24, Arg43, and Arg87–Thr90 each bind phosphate. A purine D-ribonucleoside is bound by residues Glu179–Glu181 and Ser203–Asp204. The Proton donor role is filled by Asp204.

The protein belongs to the PNP/UDP phosphorylase family. As to quaternary structure, homohexamer; trimer of homodimers.

The enzyme catalyses a purine D-ribonucleoside + phosphate = a purine nucleobase + alpha-D-ribose 1-phosphate. It catalyses the reaction a purine 2'-deoxy-D-ribonucleoside + phosphate = a purine nucleobase + 2-deoxy-alpha-D-ribose 1-phosphate. In terms of biological role, catalyzes the reversible phosphorolytic breakdown of the N-glycosidic bond in the beta-(deoxy)ribonucleoside molecules, with the formation of the corresponding free purine bases and pentose-1-phosphate. The polypeptide is Purine nucleoside phosphorylase DeoD-type (Streptococcus pneumoniae serotype 2 (strain D39 / NCTC 7466)).